We begin with the raw amino-acid sequence, 316 residues long: Aspartate carbamoyltransferase catalytic subunit (316 aa).

2 residues coordinate carbamoyl phosphate: R56 and T57. An L-aspartate-binding site is contributed by K84. The carbamoyl phosphate site is built by R106, H139, and Q142. Residues R172 and R224 each contribute to the L-aspartate site. G268 and P269 together coordinate carbamoyl phosphate.

Belongs to the aspartate/ornithine carbamoyltransferase superfamily. ATCase family. In terms of assembly, heterododecamer (2C3:3R2) of six catalytic PyrB chains organized as two trimers (C3), and six regulatory PyrI chains organized as three dimers (R2).

It carries out the reaction carbamoyl phosphate + L-aspartate = N-carbamoyl-L-aspartate + phosphate + H(+). It participates in pyrimidine metabolism; UMP biosynthesis via de novo pathway; (S)-dihydroorotate from bicarbonate: step 2/3. Its function is as follows. Catalyzes the condensation of carbamoyl phosphate and aspartate to form carbamoyl aspartate and inorganic phosphate, the committed step in the de novo pyrimidine nucleotide biosynthesis pathway. This Ligilactobacillus salivarius (strain UCC118) (Lactobacillus salivarius) protein is Aspartate carbamoyltransferase catalytic subunit.